The sequence spans 165 residues: Secreted acidic protein 2 (165 aa).

Composition is skewed to acidic residues over residues 1 to 58 (WSXS…DDSG) and 80 to 102 (ESSDDDNERDDTSDDSVGDDAYN). The tract at residues 1–112 (WSXSGDDDDD…DDSQAGELNS (112 aa)) is disordered. The span at 103-112 (DDSQAGELNS) shows a compositional bias: polar residues.

Component of the acid-insoluble and acid-soluble organic matrix of the aragonitic skeleton (at protein level).

It is found in the secreted. The sequence is that of Secreted acidic protein 2 from Acropora millepora (Staghorn coral).